The sequence spans 284 residues: uncharacterized protein (284 aa).

A compositionally biased stretch (polar residues) spans 1–10; it reads MSNSVTNFEM. A disordered region spans residues 1–28; sequence MSNSVTNFEMSSVLPGKKPCQGKNNESQ.

This is an uncharacterized protein from Escherichia coli (strain K12).